A 1241-amino-acid polypeptide reads, in one-letter code: ATP-dependent helicase/nuclease subunit A (1241 aa).

The UvrD-like helicase ATP-binding domain maps to serine 12–arginine 485. An ATP-binding site is contributed by alanine 33–threonine 40. The region spanning glycine 505–glycine 805 is the UvrD-like helicase C-terminal domain.

Belongs to the helicase family. AddA subfamily. As to quaternary structure, heterodimer of AddA and AddB/RexB. Mg(2+) serves as cofactor.

It catalyses the reaction Couples ATP hydrolysis with the unwinding of duplex DNA by translocating in the 3'-5' direction.. It carries out the reaction ATP + H2O = ADP + phosphate + H(+). Functionally, the heterodimer acts as both an ATP-dependent DNA helicase and an ATP-dependent, dual-direction single-stranded exonuclease. Recognizes the chi site generating a DNA molecule suitable for the initiation of homologous recombination. The AddA nuclease domain is required for chi fragment generation; this subunit has the helicase and 3' -&gt; 5' nuclease activities. The chain is ATP-dependent helicase/nuclease subunit A from Bacillus thuringiensis subsp. konkukian (strain 97-27).